Here is a 448-residue protein sequence, read N- to C-terminus: Homogentisate 1,2-dioxygenase (448 aa).

Residues 1 to 26 (MNMLAPAAKNAFTPASPDRPAYQSGF) form a disordered region. H302 acts as the Proton acceptor in catalysis. Fe cation is bound by residues H345 and E351. Homogentisate contacts are provided by Y360 and H381. H381 is a Fe cation binding site.

This sequence belongs to the homogentisate dioxygenase family. In terms of assembly, hexamer; dimer of trimers. Fe cation is required as a cofactor.

It carries out the reaction homogentisate + O2 = 4-maleylacetoacetate + H(+). Its pathway is amino-acid degradation; L-phenylalanine degradation; acetoacetate and fumarate from L-phenylalanine: step 4/6. Involved in the catabolism of homogentisate (2,5-dihydroxyphenylacetate or 2,5-OH-PhAc), a central intermediate in the degradation of phenylalanine and tyrosine. Catalyzes the oxidative ring cleavage of the aromatic ring of homogentisate to yield maleylacetoacetate. This chain is Homogentisate 1,2-dioxygenase, found in Ralstonia nicotianae (strain ATCC BAA-1114 / GMI1000) (Ralstonia solanacearum).